Consider the following 89-residue polypeptide: Small ribosomal subunit protein uS19 (89 aa).

The protein belongs to the universal ribosomal protein uS19 family.

In terms of biological role, protein S19 forms a complex with S13 that binds strongly to the 16S ribosomal RNA. The sequence is that of Small ribosomal subunit protein uS19 from Xanthomonas axonopodis pv. citri (strain 306).